The chain runs to 986 residues: Anoctamin-1 (986 aa).

Topologically, residues 1 to 333 (MRVNEKYSTL…FGEKIGLYFA (333 aa)) are cytoplasmic. Positions 79-121 (LVRRVQHSDTPSGARSVKQDHPLPGKGASLDAGSGEPPMDYHE) are disordered. Phosphoserine is present on residues Ser-107 and Ser-196. Residues 334–354 (WLGVYTQMLIPASIVGIIVFL) traverse the membrane as a helical segment. Over 355 to 406 (YGCATMDENIPSMEMCDQRHNITMCPLCDKTCSYWKMSSACATARASHLFDN) the chain is Extracellular. Cystine bridges form between Cys-370-Cys-395, Cys-379-Cys-862, Cys-382-Cys-386, and Cys-651-Cys-656. A helical membrane pass occupies residues 407–427 (PATVFFSVFMALWAATFMEHW). Glu-425 is a Ca(2+) binding site. The Cytoplasmic segment spans residues 428–519 (KRKQMRLNYR…RDRFPAYLTN (92 aa)). A helical membrane pass occupies residues 520–540 (LVSIIFMIAVTFAIVLGVIIY). The Extracellular portion of the chain corresponds to 541-568 (RISMAAALAMNSSPSVRSNIRVTVTATA). The chain crosses the membrane as a helical span at residues 569 to 589 (VIINLVVIILLDEVYGCIARW). The Cytoplasmic segment spans residues 590 to 607 (LTKIEVPKTEKSFEERLI). The chain crosses the membrane as a helical span at residues 608 to 628 (FKAFLLKFVNSYTPIFYVAFF). The Extracellular portion of the chain corresponds to 629-657 (KGRFVGRPGDYVYIFRSFRMEECAPGGCL). A helical membrane pass occupies residues 658–678 (MELCIQLSIIMLGKQLIQNNL). Positions 677, 680, 728, 731, 760, and 764 each coordinate Ca(2+). At 679 to 725 (FEIGIPKMKKLIRYLKLKQQSPPDHEECVKRKQRYEVDYNLEPFAGL) the chain is on the cytoplasmic side. The next 2 helical transmembrane spans lie at 726-746 (TPEYMEMIIQFGFVTLFVASF) and 747-767 (PLAPLFALLNNIIEIRLDAKK). Residues 768–784 (FVTELRRPVAVRAKDIG) lie on the Cytoplasmic side of the membrane. The chain crosses the membrane as a helical span at residues 785–805 (IWYNILRGIGKLAVIINAFVI). The Extracellular portion of the chain corresponds to 806 to 892 (SFTSDFIPRL…FWAVLAARLA (87 aa)). Asn-832 carries an N-linked (GlcNAc...) asparagine glycan. The helical transmembrane segment at 893–913 (FVIVFQNLVMFMSDFVDWVIP) threads the bilayer. Positions 909 and 914 each coordinate Ca(2+). Residues 914–986 (DIPKDISQQI…PSHAYHGGVL (73 aa)) are Cytoplasmic-facing. A compositionally biased stretch (basic and acidic residues) spans 951–960 (KERQKDEPPC). Residues 951-986 (KERQKDEPPCNHHNTKACPDSLGSPAPSHAYHGGVL) form a disordered region.

Belongs to the anoctamin family. As to quaternary structure, homodimer. Interacts with CFTR. Interacts with TRPV4. In terms of tissue distribution, expressed in nasal epithelial cells (at protein level). In the kidney, expressed in the collecting duct (at protein level). Broadly expressed with higher levels in liver, skeletal muscle and gastrointestinal muscles. Expressed in eccrine sweat glands.

It is found in the apical cell membrane. It localises to the presynapse. It catalyses the reaction chloride(in) = chloride(out). Its activity is regulated as follows. ATP and calmodulin are essential for its activation. Channel activity is inhibited by CFTR protein and by chloride inhibitors such as niflumic acid (NFA) and 4,4'-diisothiocyanatostilbene-2,2'-disulfonic acid (DIDS). Activated by heat with activation seen at temperatures above 44 degrees Celsius. Activated by BDNF in radial glial cells. Functionally, calcium-activated chloride channel (CaCC). Plays a role in transepithelial anion transport and smooth muscle contraction. Required for the normal functioning of the interstitial cells of Cajal (ICCs) which generate electrical pacemaker activity in gastrointestinal smooth muscles. Acts as a major contributor to basal and stimulated chloride conductance in airway epithelial cells and plays an important role in tracheal cartilage development. Required for CFTR activation by enhancing endoplasmic reticulum Ca(2+) store release and is also required for CFTR membrane expression. Required for basal and ATP-dependent mucus secretion in airways and intestine, probably by controlling exocytosis of mucus-filled granules by providing Ca(2+) to an apical signaling compartment. Contributes to airway mucus expression induced by interleukins IL3 and IL8 and by the asthma-associated protein CLCA1 and is required for expression of mucin MUC5AC. However, was shown in another study not to be required for MUC5AC expression. Plays a role in the propagation of Ca(2+) waves in Kolliker's organ in the cochlea and contributes to the refinement of auditory brainstem circuitries prior to hearing onset. In vomeronasal sensory neurons, modulates spontaneous firing patterns in the absence of stimuli as well as the firing pattern of pheromone-evoked activity. Responsible for calcium-activated chloride channel activity in type I taste cells of the vallate papillae. Acts as a heat sensor in nociceptive neurons. In dorsal root ganglion neurons, plays a role in mediating non-histaminergic Mas-related G-protein coupled receptor (MRGPR)-dependent itching, acting as a downstream effector of MRGPRs. In the developing brain, required for the Ca(2+)-dependent process extension of radial glial cells. Calcium-activated chloride channel (CaCC). Contributes to calcium-activated chloride secretion in human sweat gland epithelial cells. Shows increased basal chloride permeability and decreased Ca(2+)-induced chloride permeability. Its function is as follows. Calcium-activated chloride channel (CaCC). Shows increased sensitivity to intracellular Ca(2+). The protein is Anoctamin-1 (ANO1) of Homo sapiens (Human).